A 165-amino-acid polypeptide reads, in one-letter code: Probable chemoreceptor glutamine deamidase CheD (165 aa).

It belongs to the CheD family.

It catalyses the reaction L-glutaminyl-[protein] + H2O = L-glutamyl-[protein] + NH4(+). In terms of biological role, probably deamidates glutamine residues to glutamate on methyl-accepting chemotaxis receptors (MCPs), playing an important role in chemotaxis. This is Probable chemoreceptor glutamine deamidase CheD from Symbiobacterium thermophilum (strain DSM 24528 / JCM 14929 / IAM 14863 / T).